Consider the following 692-residue polypeptide: Elongation factor G (692 aa).

Positions 8-282 constitute a tr-type G domain; that stretch reads ENTRNIGIMA…AVLDYLPSPL (275 aa). GTP is bound by residues 17 to 24, 81 to 85, and 135 to 138; these read AHIDAGKT, DTPGH, and NKMD.

This sequence belongs to the TRAFAC class translation factor GTPase superfamily. Classic translation factor GTPase family. EF-G/EF-2 subfamily.

The protein resides in the cytoplasm. Catalyzes the GTP-dependent ribosomal translocation step during translation elongation. During this step, the ribosome changes from the pre-translocational (PRE) to the post-translocational (POST) state as the newly formed A-site-bound peptidyl-tRNA and P-site-bound deacylated tRNA move to the P and E sites, respectively. Catalyzes the coordinated movement of the two tRNA molecules, the mRNA and conformational changes in the ribosome. In Halalkalibacterium halodurans (strain ATCC BAA-125 / DSM 18197 / FERM 7344 / JCM 9153 / C-125) (Bacillus halodurans), this protein is Elongation factor G (fusA).